Here is a 768-residue protein sequence, read N- to C-terminus: Cullin-3 (768 aa).

Residues 677–698 (VAAKQGESDPERKETRQKVDDD) form a disordered region. The span at 682–698 (GESDPERKETRQKVDDD) shows a compositional bias: basic and acidic residues. One can recognise a Cullin neddylation domain in the interval 698–760 (DRKHEIEAAI…REYLARTPED (63 aa)). A Glycyl lysine isopeptide (Lys-Gly) (interchain with G-Cter in NEDD8) cross-link involves residue K712.

This sequence belongs to the cullin family. Component of multiple BCR (BTB-CUL3-RBX1) E3 ubiquitin-protein ligase complexes formed of cul3, rbx1 and a variable BTB domain-containing protein acting as both, adapter to cullin and substrate recognition subunit. Interacts with btbd6. Post-translationally, neddylated. Attachment of NEDD8 is required for the E3 ubiquitin-protein ligase activity of the SCF-like complex.

Its subcellular location is the nucleus. The protein operates within protein modification; protein ubiquitination. Functionally, probable core component of cullin-based SCF-like E3 ubiquitin-protein ligase complexes which mediate the ubiquitination and subsequent proteasomal degradation of target proteins. The E3 ubiquitin-protein ligase activity of the complex is dependent on the neddylation of the cullin subunit. Involved in ER-Golgi transport by regulating the size of COPII coats, thereby playing a key role in collagen export, which is required for embryonic stem (ES) cells division. May play a role in the regulation of mittotic entry via ubiquitination of aurka. This Xenopus tropicalis (Western clawed frog) protein is Cullin-3 (cul3).